Reading from the N-terminus, the 315-residue chain is MFEKIAIIGGSGNVGSHIAFLGAMRHIAKEILLFSNDIPRCKGVGLDISQAAAIFDIPILIKGCNSYEEIAESEVVIITAGFPRTPNMTRNDLLLKNASIIQEISSNVARIAPQSLLIVVSNPLDAMCLVAKQWSKFEKERVIGMAGILDSARLTYESKVMLGDFNKHIQSYVIGSHSDDMLPLLRHCLCEGKVFTDIFTPKMQEELIKETKGGGAKIVNYYQKGSAYFAPASGVIKILEAISTLNEEILVCSVFTEGEYGIKDIYLGLPIKLGKKGVEHIVELPLNQQEQEMLNISTQGIKEQVEILKDNKLLY.

Residue 9 to 15 (GGSGNVG) coordinates NAD(+). Residues R84 and R90 each coordinate substrate. Residues N97 and 120–122 (VSN) contribute to the NAD(+) site. N122 and R153 together coordinate substrate. Residue H177 is the Proton acceptor of the active site.

The protein belongs to the LDH/MDH superfamily.

It catalyses the reaction (S)-malate + NAD(+) = oxaloacetate + NADH + H(+). In terms of biological role, catalyzes the reversible oxidation of malate to oxaloacetate. The polypeptide is Malate dehydrogenase (Helicobacter hepaticus (strain ATCC 51449 / 3B1)).